A 285-amino-acid chain; its full sequence is Pantothenate synthetase (285 aa).

Residue 30 to 37 (MGNLHRGH) participates in ATP binding. Catalysis depends on H37, which acts as the Proton donor. Q61 is a binding site for (R)-pantoate. Residue Q61 participates in beta-alanine binding. 149 to 152 (GRKD) contacts ATP. Q155 contributes to the (R)-pantoate binding site. ATP is bound by residues V178 and 186-189 (LSSR).

This sequence belongs to the pantothenate synthetase family. As to quaternary structure, homodimer.

Its subcellular location is the cytoplasm. It carries out the reaction (R)-pantoate + beta-alanine + ATP = (R)-pantothenate + AMP + diphosphate + H(+). It functions in the pathway cofactor biosynthesis; (R)-pantothenate biosynthesis; (R)-pantothenate from (R)-pantoate and beta-alanine: step 1/1. In terms of biological role, catalyzes the condensation of pantoate with beta-alanine in an ATP-dependent reaction via a pantoyl-adenylate intermediate. This chain is Pantothenate synthetase, found in Halorhodospira halophila (strain DSM 244 / SL1) (Ectothiorhodospira halophila (strain DSM 244 / SL1)).